Reading from the N-terminus, the 161-residue chain is 3-hydroxyacyl-[acyl-carrier-protein] dehydratase FabZ (161 aa).

The active site involves His-55.

The protein belongs to the thioester dehydratase family. FabZ subfamily.

It localises to the cytoplasm. It catalyses the reaction a (3R)-hydroxyacyl-[ACP] = a (2E)-enoyl-[ACP] + H2O. Involved in unsaturated fatty acids biosynthesis. Catalyzes the dehydration of short chain beta-hydroxyacyl-ACPs and long chain saturated and unsaturated beta-hydroxyacyl-ACPs. In Jannaschia sp. (strain CCS1), this protein is 3-hydroxyacyl-[acyl-carrier-protein] dehydratase FabZ.